The primary structure comprises 134 residues: Profilin-2 (134 aa).

Cysteine 13 and cysteine 118 are joined by a disulfide. An Involved in PIP2 interaction motif is present at residues 84 to 100 (AVIRGKKGSGGITIKKT). Threonine 114 is subject to Phosphothreonine.

This sequence belongs to the profilin family. In terms of assembly, occurs in many kinds of cells as a complex with monomeric actin in a 1:1 ratio. Phosphorylated by MAP kinases.

It localises to the cytoplasm. The protein localises to the cytoskeleton. Functionally, binds to actin and affects the structure of the cytoskeleton. At high concentrations, profilin prevents the polymerization of actin, whereas it enhances it at low concentrations. In Olea europaea (Common olive), this protein is Profilin-2.